A 109-amino-acid chain; its full sequence is MGMKIVVGDDVVVISGKDKGKMGKVIKVLRKKHFGKDVSFAIVSGVNICKKSVKATQKSDGGIINIAKPINLSNIALFDSTLGIRTRVGYKFIDEKKVRFMKSSGKVIE.

The protein belongs to the universal ribosomal protein uL24 family. In terms of assembly, part of the 50S ribosomal subunit.

Functionally, one of two assembly initiator proteins, it binds directly to the 5'-end of the 23S rRNA, where it nucleates assembly of the 50S subunit. In terms of biological role, one of the proteins that surrounds the polypeptide exit tunnel on the outside of the subunit. The protein is Large ribosomal subunit protein uL24 of Ehrlichia canis (strain Jake).